Consider the following 100-residue polypeptide: Aspartyl/glutamyl-tRNA(Asn/Gln) amidotransferase subunit C (100 aa).

Belongs to the GatC family. Heterotrimer of A, B and C subunits.

The enzyme catalyses L-glutamyl-tRNA(Gln) + L-glutamine + ATP + H2O = L-glutaminyl-tRNA(Gln) + L-glutamate + ADP + phosphate + H(+). It carries out the reaction L-aspartyl-tRNA(Asn) + L-glutamine + ATP + H2O = L-asparaginyl-tRNA(Asn) + L-glutamate + ADP + phosphate + 2 H(+). Allows the formation of correctly charged Asn-tRNA(Asn) or Gln-tRNA(Gln) through the transamidation of misacylated Asp-tRNA(Asn) or Glu-tRNA(Gln) in organisms which lack either or both of asparaginyl-tRNA or glutaminyl-tRNA synthetases. The reaction takes place in the presence of glutamine and ATP through an activated phospho-Asp-tRNA(Asn) or phospho-Glu-tRNA(Gln). This is Aspartyl/glutamyl-tRNA(Asn/Gln) amidotransferase subunit C from Janthinobacterium sp. (strain Marseille) (Minibacterium massiliensis).